A 120-amino-acid chain; its full sequence is NAD(P)H-quinone oxidoreductase subunit 3, chloroplastic (120 aa).

The next 3 helical transmembrane spans lie at 9-29, 64-84, and 88-108; these read IFWA…FISG, MFAL…PWAM, and VLGV…IVGS.

This sequence belongs to the complex I subunit 3 family. In terms of assembly, NDH is composed of at least 16 different subunits, 5 of which are encoded in the nucleus.

It localises to the plastid. Its subcellular location is the chloroplast thylakoid membrane. It carries out the reaction a plastoquinone + NADH + (n+1) H(+)(in) = a plastoquinol + NAD(+) + n H(+)(out). It catalyses the reaction a plastoquinone + NADPH + (n+1) H(+)(in) = a plastoquinol + NADP(+) + n H(+)(out). NDH shuttles electrons from NAD(P)H:plastoquinone, via FMN and iron-sulfur (Fe-S) centers, to quinones in the photosynthetic chain and possibly in a chloroplast respiratory chain. The immediate electron acceptor for the enzyme in this species is believed to be plastoquinone. Couples the redox reaction to proton translocation, and thus conserves the redox energy in a proton gradient. This Vitis vinifera (Grape) protein is NAD(P)H-quinone oxidoreductase subunit 3, chloroplastic.